The chain runs to 535 residues: Heparanase (535 aa).

Residues 1 to 27 (MLRLLLLWLWGPLGALAQGAPAGTAPT) form the signal peptide. Residues 54 to 56 (DAS) and Thr89 contribute to the heparan sulfate group site. Residues 102–149 (PTSEERSYWKSQVNHDICRSEPVSAAVLRKLQVEWPFQELLLLREQYQ) constitute a propeptide, linker peptide. Cys119 and Cys171 are oxidised to a cystine. Residue 150-154 (KEFKN) participates in heparan sulfate group binding. N-linked (GlcNAc...) asparagine glycans are attached at residues Asn192 and Asn209. Glu217 (proton donor) is an active-site residue. Residues 262-272 (QPRGKTVKLLR), His288, and Arg295 contribute to the heparan sulfate group site. The interval 280-409 (EVIDSLTWHH…LLFKKLVGPR (130 aa)) is required for heterodimerization with the heparanase 8 kDa subunit. Glu335 acts as the Nucleophile in catalysis. Heparan sulfate group is bound by residues 340 to 342 (YGG) and 381 to 383 (GNY). Cysteines 429 and 534 form a disulfide. Asn451 carries N-linked (GlcNAc...) asparagine glycosylation. The tract at residues 519–535 (FSYGFFVIRNAKIAACI) is required for transferring proheparanase to the Golgi apparatus, secretion and subsequent enzyme activity and for enhancement of PKB/AKT1 phosphorylation.

This sequence belongs to the glycosyl hydrolase 79 family. Heterodimer; heterodimer formation between the 8 kDa and the 50 kDa subunits is required for enzyme activity. Interacts with TF; the interaction, inhibited by heparin, enhances the generation of activated factor X and activates coagulation. Interacts with HRG; the interaction is enhanced at acidic pH, partially inhibits binding of HPSE to cell surface receptors and modulates its enzymatic activity. Interacts with SDC1; the interaction enhances the shedding of SDC1. Interacts with HPSE2. Post-translationally, proteolytically processed. The cleavage of the 65 kDa form leads to the generation of a linker peptide, and the 8 kDa and 50 kDa products. The active form, the 8/50 kDa heterodimer, is resistant to degradation. Complete removal of the linker peptide appears to be a prerequisite to the complete activation of the enzyme. In terms of processing, N-glycosylated. Glycosylation of the 50 kDa subunit appears to be essential for its solubility. Expressed in skin, mainly in the stratum granulosum and the first layer of the stratum corneum in the upper part of the epidermis. Also detected in hair follicles and in sebaceous glands.

It localises to the lysosome membrane. The protein resides in the secreted. It is found in the nucleus. It carries out the reaction endohydrolysis of (1-&gt;4)-beta-D-glycosidic bonds of heparan sulfate chains in heparan sulfate proteoglycan.. With respect to regulation, inhibited by EDTA and activated by calcium and magnesium. Inhibited by laminarin sulfate and, to a lower extent, by heparin and sulfamin. Its function is as follows. Endoglycosidase that cleaves heparan sulfate proteoglycans (HSPGs) into heparan sulfate side chains and core proteoglycans. Participates in extracellular matrix (ECM) degradation and remodeling. Selectively cleaves the linkage between a glucuronic acid unit and an N-sulfo glucosamine unit carrying either a 3-O-sulfo or a 6-O-sulfo group. Can also cleave the linkage between a glucuronic acid unit and an N-sulfo glucosamine unit carrying a 2-O-sulfo group, but not linkages between a glucuronic acid unit and a 2-O-sulfated iduronic acid moiety. It is essentially inactive at neutral pH but becomes active under acidic conditions such as during tumor invasion and in inflammatory processes. Facilitates cell migration associated with metastasis, wound healing and inflammation. Enhances shedding of syndecans, and increases endothelial invasion and angiogenesis in myelomas. Acts as a procoagulant by increasing the generation of activation factor X in the presence of tissue factor and activation factor VII. Increases cell adhesion to the extracellular matrix (ECM), independent of its enzymatic activity. Induces AKT1/PKB phosphorylation via lipid rafts increasing cell mobility and invasion. Heparin increases this AKT1/PKB activation. Regulates osteogenesis. Enhances angiogenesis through up-regulation of SRC-mediated activation of VEGF. Implicated in hair follicle inner root sheath differentiation and hair homeostasis. The protein is Heparanase (Hpse) of Mus musculus (Mouse).